Reading from the N-terminus, the 331-residue chain is Type 2 lactosamine alpha-2,3-sialyltransferase (331 aa).

Topologically, residues 1 to 4 (MRGY) are cytoplasmic. Residues 5–25 (LVAIFLSAVFLYYVLHCILWG) form a helical; Signal-anchor for type II membrane protein membrane-spanning segment. Residues 26–331 (TNVYWAAPVE…KNLVINLTQD (306 aa)) lie on the Lumenal side of the membrane. Residues Asn129, Asn181, Asn282, Asn295, Asn308, and Asn327 are each glycosylated (N-linked (GlcNAc...) asparagine).

This sequence belongs to the glycosyltransferase 29 family.

It localises to the golgi apparatus membrane. The enzyme catalyses a neolactoside nLc4Cer(d18:1(4E)) + CMP-N-acetyl-beta-neuraminate = a neolactoside IV(3)-alpha-NeuAc-nLc4Cer(d18:1(4E)) + CMP + H(+). It catalyses the reaction a beta-D-galactosyl-(1-&gt;4)-N-acetyl-beta-D-glucosaminyl derivative + CMP-N-acetyl-beta-neuraminate = an N-acetyl-alpha-neuraminyl-(2-&gt;3)-beta-D-galactosyl-(1-&gt;4)-N-acetyl-beta-D-glucosaminyl derivative + CMP + H(+). It carries out the reaction a neolactoside nLc6Cer(d18:1(4E)) + CMP-N-acetyl-beta-neuraminate = a neolactoside VI(3)-alpha-NeuNAc-nLc6Cer(d18:1(4E)) + CMP + H(+). Its function is as follows. Transfers the sialyl residue from CMP-N-acetyl-beta-neuraminate to the terminal galactose residue on sugar chains of glycoproteins and glycolipids. It's alpha-2,3-sialyltransferase activity is specific toward type II glycan chains (Galbeta1-4GlcNAc) on glycoproteins and glycolipids such as neolactosides nLc4Cer and nLc6Cer, whose sialyl-products serve as precursors for the Lewis X antigen. Critically involved in the synthesis of functional selectin ligands needed for neutrophil recruitment during inflammation and lymphocyte homing to the lymph nodes. This chain is Type 2 lactosamine alpha-2,3-sialyltransferase (ST3GAL6), found in Pongo abelii (Sumatran orangutan).